We begin with the raw amino-acid sequence, 344 residues long: Beta-1,4-galactosyltransferase 4 (344 aa).

Over 1–12 the chain is Cytoplasmic; that stretch reads MGFNLTFHLSYK. The chain crosses the membrane as a helical; Signal-anchor for type II membrane protein span at residues 13-38; the sequence is FRLLLLLTLCLTVVGWATSNYFVGAI. Residues 39-344 lie on the Lumenal side of the membrane; the sequence is QEIPKAKEFM…NITVDFWFGA (306 aa). Cysteine 77 and cysteine 118 are joined by a disulfide. UDP-alpha-D-galactose contacts are provided by residues 129–133, 168–170, and 195–196; these read PHRNR, FNR, and VD. Cysteines 189 and 208 form a disulfide. Aspartate 196 is a Mn(2+) binding site. Asparagine 220 is a glycosylation site (N-linked (GlcNAc...) asparagine). UDP-alpha-D-galactose contacts are provided by tyrosine 224 and tryptophan 256. An N-acetyl-D-glucosamine-binding site is contributed by 258 to 261; that stretch reads GEDD. Histidine 289 is a Mn(2+) binding site. 289-291 lines the UDP-alpha-D-galactose pocket; that stretch reads HTR. An N-acetyl-D-glucosamine-binding site is contributed by arginine 301. An N-linked (GlcNAc...) asparagine glycan is attached at asparagine 335.

It belongs to the glycosyltransferase 7 family. As to quaternary structure, interacts with SLC35A2 (isoform 2; UGT1). It depends on Mn(2+) as a cofactor. In terms of processing, N-glycosylated. Highest expression is observed in placenta, pancreas, kidney and heart. Expressed in corneal epithelial cells.

Its subcellular location is the golgi apparatus membrane. It is found in the secreted. It catalyses the reaction N-acetyl-D-glucosamine + UDP-alpha-D-galactose = beta-D-galactosyl-(1-&gt;4)-N-acetyl-D-glucosamine + UDP + H(+). The catalysed reaction is a beta-D-GlcNAc-(1-&gt;3)-beta-D-Gal-(1-&gt;4)-beta-D-Glc-(1&lt;-&gt;1)-Cer(d18:1(4E)) + UDP-alpha-D-galactose = a neolactoside nLc4Cer(d18:1(4E)) + UDP + H(+). It carries out the reaction 3-O-{beta-D-galactosyl-(1-&gt;3)-[6-O-sulfo-N-acetyl-beta-D-glucosaminyl-(1-&gt;6)]-N-acetyl-alpha-D-galactosaminyl}-L-seryl-[protein] + UDP-alpha-D-galactose = 3-O-{beta-D-galactosyl-(1-&gt;3)-[beta-D-galactosyl-(1-&gt;4)-6-O-sulfo-N-acetyl-beta-D-glucosaminyl-(1-&gt;6)]-N-acetyl-alpha-D-galactosaminyl}-L-seryl-[protein] + UDP + H(+). The enzyme catalyses 3-O-{beta-D-galactosyl-(1-&gt;3)-[6-O-sulfo-N-acetyl-beta-D-glucosaminyl-(1-&gt;6)]-N-acetyl-alpha-D-galactosaminyl}-L-threonyl-[protein] + UDP-alpha-D-galactose = 3-O-{beta-D-galactosyl-(1-&gt;3)-[beta-D-galactosyl-(1-&gt;4)-6-O-sulfo-N-acetyl-beta-D-glucosaminyl-(1-&gt;6)]-N-acetyl-alpha-D-galactosaminyl}-L-threonyl-[protein] + UDP + H(+). Its pathway is protein modification; protein glycosylation. It functions in the pathway glycolipid biosynthesis. Its activity is regulated as follows. Up-regulated by LALBA. In terms of biological role, galactose (Gal) transferase involved in the synthesis of terminal N-acetyllactosamine (LacNac) unit present on glycan chains of glycoproteins and glycosphingolipids. Catalyzes the transfer of Gal residue via a beta1-&gt;4 linkage from UDP-Gal to the non-reducing terminal N-acetyl glucosamine 6-O-sulfate (6-O-sulfoGlcNAc) in the linearly growing chain of both N- and O-linked keratan sulfate proteoglycans. Cooperates with B3GNT7 N-acetyl glucosamine transferase and CHST6 and CHST1 sulfotransferases to construct and elongate mono- and disulfated disaccharide units [-&gt;3Galbeta1-&gt;4(6-sulfoGlcNAcbeta)1-&gt;] and [-&gt;3(6-sulfoGalbeta)1-&gt;4(6-sulfoGlcNAcbeta)1-&gt;] within keratan sulfate polymer. Transfers Gal residue via a beta1-&gt;4 linkage to terminal 6-O-sulfoGlcNAc within the LacNac unit of core 2 O-glycans forming 6-sulfo-sialyl-Lewis X (sLex). May contribute to the generation of sLex epitope on mucin-type glycoproteins that serve as ligands for SELL/L-selectin, a major regulator of leukocyte migration. In the biosynthesis pathway of neolacto-series glycosphingolipids, transfers Gal residue via a beta1-&gt;4 linkage to terminal GlcNAc of a lactotriaosylceramide (Lc3Cer) acceptor to form a neolactotetraosylceramide. The sequence is that of Beta-1,4-galactosyltransferase 4 from Homo sapiens (Human).